Here is a 351-residue protein sequence, read N- to C-terminus: Quinolinate phosphoribosyltransferase [decarboxylating] 2b, mitochondrial (351 aa).

Substrate contacts are provided by residues Arg142, 173 to 175, Arg197, Lys207, Glu240, Asp267, 299 to 301, and 320 to 322; these read TRK, SGN, and SGA.

Belongs to the NadC/ModD family. As to expression, expressed in roots and flowers.

It localises to the mitochondrion. The catalysed reaction is nicotinate beta-D-ribonucleotide + CO2 + diphosphate = quinolinate + 5-phospho-alpha-D-ribose 1-diphosphate + 2 H(+). The protein operates within alkaloid biosynthesis; nicotine biosynthesis. It participates in cofactor biosynthesis; NAD(+) biosynthesis; nicotinate D-ribonucleotide from quinolinate: step 1/1. Its function is as follows. Involved in the biosynthesis of pyridine alkaloid natural products, leading mainly to the production of anabasine, anatabine, nicotine and nornicotine, effective deterrents against herbivores with antiparasitic and pesticide properties (neurotoxins); nornicotine serves as the precursor in the synthesis of the carcinogen compound N'-nitrosonornicotine (NNN). Involved in the catabolism of quinolinic acid (QA). This chain is Quinolinate phosphoribosyltransferase [decarboxylating] 2b, mitochondrial, found in Nicotiana tabacum (Common tobacco).